We begin with the raw amino-acid sequence, 507 residues long: MSKFPVPLRTIGGLRPSTTAAISAANIGFTQSSRALSTGAAAKSSGLVGQVARQYPNAAAFSIKQVRLYSSGNLPKHNRVALPALSPTMELGTVVSWQKKEGDQLSEGDLLCEIETDKATMGFETPEEGYLAKILIQEGSKDVPIGKLLCIIVDNEADVAAFKDFKDDGASSGGSAPAAEKAPEPAKPAASSQPSPPAQMYQAPSVPKSAPIPHSSSGRVSASPFAKKLAAENGLDLSGVSGSGPGGRILASDLSQAPAKGATSTTTQAVSGQDYTDIPLSNMRKTIAKRLTESKSTIPHYYLTSEIQLDTLLQVREKLNGLLAKGTSGQATKISINDFIIKASALACQRVPEANSYWMDSFIRENHHVDVSVAVSTPAGLITPIIFNAHAKGLATIASEIVELAQRAREGKLQPHEFQGGTFTVSNLGMFGSVSDFTAIINPPQSCILAIGGASDKLVPDEAEGYKKIKTMKVTLSCDHRTVDGAVGAVWLRHFKEFLEKPHTMLL.

Positions 77-153 (HNRVALPALS…PIGKLLCIIV (77 aa)) constitute a Lipoyl-binding domain. Position 118 is an N6-lipoyllysine (Lys-118). Disordered regions lie at residues 168–223 (DGAS…VSAS) and 248–270 (RILA…TQAV). Positions 221–258 (SASPFAKKLAAENGLDLSGVSGSGPGGRILASDLSQAP) constitute a Peripheral subunit-binding (PSBD) domain. Catalysis depends on residues His-480 and Asp-484.

It belongs to the 2-oxoacid dehydrogenase family. The cofactor is (R)-lipoate.

It is found in the mitochondrion matrix. It catalyses the reaction N(6)-[(R)-dihydrolipoyl]-L-lysyl-[protein] + acetyl-CoA = N(6)-[(R)-S(8)-acetyldihydrolipoyl]-L-lysyl-[protein] + CoA. The pyruvate dehydrogenase complex catalyzes the overall conversion of pyruvate to acetyl-CoA and CO(2). It contains multiple copies of three enzymatic components: pyruvate dehydrogenase (E1), dihydrolipoamide acetyltransferase (E2) and lipoamide dehydrogenase (E3). This chain is Dihydrolipoyllysine-residue acetyltransferase component of pyruvate dehydrogenase complex, mitochondrial, found in Caenorhabditis elegans.